The primary structure comprises 93 residues: U12-lycotoxin-Ls1c (93 aa).

A signal peptide spans 1–18 (MKFAVILLFSLVVLAVAS). Residues 19 to 38 (ESVEEVRREIDIEDLPEQQR) constitute a propeptide that is removed on maturation.

The protein belongs to the neurotoxin 31 family. Contains 5 disulfide bonds. Expressed by the venom gland.

The protein resides in the secreted. This chain is U12-lycotoxin-Ls1c, found in Lycosa singoriensis (Wolf spider).